A 223-amino-acid polypeptide reads, in one-letter code: 7-cyano-7-deazaguanine synthase (223 aa).

15–25 (FSGGQDSTTCL) is an ATP binding site. Zn(2+) contacts are provided by C191, C200, C203, and C206.

It belongs to the QueC family. Homodimer. The cofactor is Zn(2+).

The enzyme catalyses 7-carboxy-7-deazaguanine + NH4(+) + ATP = 7-cyano-7-deazaguanine + ADP + phosphate + H2O + H(+). The protein operates within purine metabolism; 7-cyano-7-deazaguanine biosynthesis. Its function is as follows. Catalyzes the ATP-dependent conversion of 7-carboxy-7-deazaguanine (CDG) to 7-cyano-7-deazaguanine (preQ(0)). The chain is 7-cyano-7-deazaguanine synthase from Staphylococcus haemolyticus (strain JCSC1435).